A 418-amino-acid chain; its full sequence is Putative competence-damage inducible protein (418 aa).

This sequence belongs to the CinA family.

The protein is Putative competence-damage inducible protein of Streptococcus pneumoniae (strain CGSP14).